The following is a 100-amino-acid chain: Urease subunit gamma (100 aa).

It belongs to the urease gamma subunit family. As to quaternary structure, heterotrimer of UreA (gamma), UreB (beta) and UreC (alpha) subunits. Three heterotrimers associate to form the active enzyme.

It localises to the cytoplasm. It carries out the reaction urea + 2 H2O + H(+) = hydrogencarbonate + 2 NH4(+). It functions in the pathway nitrogen metabolism; urea degradation; CO(2) and NH(3) from urea (urease route): step 1/1. The protein is Urease subunit gamma of Laribacter hongkongensis (strain HLHK9).